The sequence spans 511 residues: Maturase K (511 aa).

This sequence belongs to the intron maturase 2 family. MatK subfamily.

Its subcellular location is the plastid. The protein localises to the chloroplast. Its function is as follows. Usually encoded in the trnK tRNA gene intron. Probably assists in splicing its own and other chloroplast group II introns. The chain is Maturase K from Acorus calamus var. americanus (American sweet flag).